The primary structure comprises 197 residues: Beta-crystallin A2 (197 aa).

The tract at residues 1–11 (MSSAPAPGSAP) is N-terminal arm. 2 Beta/gamma crystallin 'Greek key' domains span residues 12–52 (VCLT…KVEN) and 53–99 (GAWV…RPVL). The tract at residues 100 to 105 (CANHSD) is connecting peptide. 2 Beta/gamma crystallin 'Greek key' domains span residues 106 to 147 (SRVT…KVSS) and 148 to 196 (GAWV…RRVQ).

This sequence belongs to the beta/gamma-crystallin family. In terms of assembly, homo/heterodimer, or complexes of higher-order. The structure of beta-crystallin oligomers seems to be stabilized through interactions between the N-terminal arms.

Its function is as follows. Crystallins are the dominant structural components of the vertebrate eye lens. The chain is Beta-crystallin A2 (Cryba2) from Mus musculus (Mouse).